A 305-amino-acid chain; its full sequence is Olfactory receptor 4F4 (305 aa).

Residues M1–T18 are Extracellular-facing. Residues F19–V42 traverse the membrane as a helical segment. The Cytoplasmic portion of the chain corresponds to V43–S50. Residues P51 to P72 traverse the membrane as a helical segment. The Extracellular portion of the chain corresponds to K73 to Q93. C90 and C182 form a disulfide bridge. Residues I94 to F113 traverse the membrane as a helical segment. Over D114–N132 the chain is Cytoplasmic. A helical membrane pass occupies residues A133–S151. At Q152–L188 the chain is on the extracellular side. A helical membrane pass occupies residues D189–T212. At I213 to K228 the chain is on the cytoplasmic side. The helical transmembrane segment at A229–Y251 threads the bilayer. The Extracellular segment spans residues A252–K262. A helical transmembrane segment spans residues F263–L282. Topologically, residues R283–F305 are cytoplasmic.

The protein belongs to the G-protein coupled receptor 1 family.

Its subcellular location is the cell membrane. Its function is as follows. Odorant receptor. The polypeptide is Olfactory receptor 4F4 (OR4F4) (Homo sapiens (Human)).